A 328-amino-acid chain; its full sequence is Malate dehydrogenase (328 aa).

NAD(+) is bound at residue 12 to 18 (GAAGQIG). Arg95 and Arg101 together coordinate substrate. Residues Asn108, Gln115, and 132–134 (VGN) contribute to the NAD(+) site. Asn134 and Arg165 together coordinate substrate. His190 (proton acceptor) is an active-site residue.

The protein belongs to the LDH/MDH superfamily. MDH type 2 family.

The enzyme catalyses (S)-malate + NAD(+) = oxaloacetate + NADH + H(+). Its function is as follows. Catalyzes the reversible oxidation of malate to oxaloacetate. This chain is Malate dehydrogenase, found in Variovorax paradoxus (strain S110).